A 205-amino-acid chain; its full sequence is Small ribosomal subunit protein uS4 (205 aa).

The disordered stretch occupies residues 20–44 (WGRPKSPVNRREYGPGQHGQRRKGK). One can recognise an S4 RNA-binding domain in the interval 94 to 154 (SRLDAIVYRS…ERSKQLLLVL (61 aa)).

This sequence belongs to the universal ribosomal protein uS4 family. Part of the 30S ribosomal subunit. Contacts protein S5. The interaction surface between S4 and S5 is involved in control of translational fidelity.

Functionally, one of the primary rRNA binding proteins, it binds directly to 16S rRNA where it nucleates assembly of the body of the 30S subunit. With S5 and S12 plays an important role in translational accuracy. The polypeptide is Small ribosomal subunit protein uS4 (Bartonella bacilliformis (strain ATCC 35685 / KC583 / Herrer 020/F12,63)).